A 1358-amino-acid polypeptide reads, in one-letter code: MAYSYTEKKRIRKDFGKRPQILDVPYLLTTQLDSYRQFLQADRSEDNRQDVGLHAAFKTVFPIVSYSGTVELEYVSYRLGKPVFDVKECQLRGMTYAAPLRVLLRLVIYDKDAPAGSRVVKDIKEQEVYMGELPLMTENGTFVINGTERVIVSQLHRSPGVFFDHDKGKTHSSGKLLFNARVIPYRGSWLDFEFDPKDSVFVRIDRRRKLPATVLLRALGMETEEILATFFETNTVSITKDGFDMELIPERLRGEVAAFDFKVKNKVLVESGRRITARHVRELEAAGIKSLEVPAEYLVGKVLAHAVIDEDSGELVANANDEITDELLKKLRAAGIKSFKTLYTNDLDHGPYISTTLNIDTCRSQLEAQVEIYRMMRPGEPPTKEAAENLFNNLFFTEERYDLSAVGRMKFNRRVGREEITGPGVLDKDDILAVLKTLIDIRNGNGQVDDIDHLGNRRVRSVGEMAENVFRVGLVRVERAVKERLSVAESEGLMPQELINAKPVAAAVKEFFGSSQLSQFMDQNNPLSEVTHKRRISALGPGGLTRERAGFEVRDVHPTHYGRVCPIETPEGPNIGLINSLAVYARTNDYGFLETPYRKVENGKVTNEIVYLSAIEEGQYVIAQANASLDAKGNLVDELVSCRHANEFTMSTPDKIEFMDISPKQIVSVAAALIPFLEHDDANRALMGSNMQRQAVPCLRAETAVVGTGIERTVAIDSGSSIVARRGGVVDSVDAARIVVRVNDDETEAGEPGVDIYNLTKYTRSNQNTCINQRPLVNVGDVLARGDVLADGSSTDLGEMALGQNMMVAFMPWNGYNFEDSILISERVVQEDRFTSIHIEELTCVARDTKLGPEEISADIPNVSESLLSKLDESGIVYVGAEVKPNDILVGKVTPKGETQLTPEEKLLRAIFGEKASDVKDTSLRVPSGMEGTVIDVRVFTRDGVDKDKRALQIEEAALAAVRKDLKDQLRIYEDDIYDRVEKLLVGKLAAGGPNKLKDGTKVTKTYLTEVPREKWFEVRMRTEEVNEQLEKMAASLKEQHEAFETRFKEQKEKLTQGDDLAPGVLKMVKVYLAVKRRMQPGDKMAGRHGNKGVVSMIVPVEDMPYLEDGTPVDIVLNPLGVPSRMNVGQVLETHLGWAAKGLGQKIGRMVEAKAKIDELRKFLDKIYNHSAKKVDLSDFSDEEILKLCANLKKGVPMATPVFDGAEEEEIKAMLKLADLPESGQTTLFDGRTGESFDRPVTVGYMHMLKLNHLVDDKMHARSTGPYSLVTQQPLGGKAQFGGQRFGEMEVWALEAYGAAYTLQEMLTVKSDDVQGRNKMYKNIVDGDHRMEANIPESFNVLMKEIRSLAINIELEQD.

Belongs to the RNA polymerase beta chain family. As to quaternary structure, the RNAP catalytic core consists of 2 alpha, 1 beta, 1 beta' and 1 omega subunit. When a sigma factor is associated with the core the holoenzyme is formed, which can initiate transcription.

The enzyme catalyses RNA(n) + a ribonucleoside 5'-triphosphate = RNA(n+1) + diphosphate. DNA-dependent RNA polymerase catalyzes the transcription of DNA into RNA using the four ribonucleoside triphosphates as substrates. This is DNA-directed RNA polymerase subunit beta from Thioalkalivibrio sulfidiphilus (strain HL-EbGR7).